A 127-amino-acid chain; its full sequence is UPF0102 protein NFA_41430 (127 aa).

It belongs to the UPF0102 family.

The protein is UPF0102 protein NFA_41430 of Nocardia farcinica (strain IFM 10152).